The sequence spans 182 residues: uncharacterized protein (182 aa).

The protein belongs to the mimivirus L6/L7/L57 family.

This is an uncharacterized protein from Acanthamoeba polyphaga mimivirus (APMV).